We begin with the raw amino-acid sequence, 313 residues long: Foldase protein PrsA (313 aa).

A signal peptide spans 1–20 (MKKKLLAGAITLLSVATLAA). The N-palmitoyl cysteine moiety is linked to residue Cys-21. Cys-21 carries the S-diacylglycerol cysteine lipid modification. The PpiC domain occupies 143–241 (TPDVTAQIIR…SQYYIVKLTK (99 aa)).

It belongs to the PrsA family.

The protein resides in the cell membrane. The enzyme catalyses [protein]-peptidylproline (omega=180) = [protein]-peptidylproline (omega=0). In terms of biological role, plays a major role in protein secretion by helping the post-translocational extracellular folding of several secreted proteins. The sequence is that of Foldase protein PrsA from Streptococcus pneumoniae (strain P1031).